Consider the following 154-residue polypeptide: Jupiter microtubule associated homolog 1 (154 aa).

Methionine 1 bears the N-acetylmethionine mark. Positions 1 to 19 (MTTTTTFKGVDPNSRNSSR) are enriched in polar residues. A disordered region spans residues 1–154 (MTTTTTFKGV…PGGKSSLVLG (154 aa)). N-acetylthreonine; in Hematological and neurological expressed 1 protein, N-terminally processed is present on threonine 2. Phosphoserine occurs at positions 28 and 31. Positions 47–59 (MASNIFGTPEENQ) are enriched in polar residues. Threonine 54 bears the Phosphothreonine mark. A compositionally biased stretch (low complexity) spans 60–71 (ASWAKSAGAKSS). Residues serine 71, serine 80, serine 87, serine 88, and serine 92 each carry the phosphoserine modification. Residues 80 to 91 (SGLQRRNSSEAS) show a composition bias toward polar residues. The span at 96-108 (LDLKGEGDIHENV) shows a compositional bias: basic and acidic residues. The segment covering 125 to 138 (PAAPVPSPVAPAPV) has biased composition (pro residues). Serine 131 carries the post-translational modification Phosphoserine. Lysine 148 is modified (N6-acetyllysine).

This sequence belongs to the JUPITER family. Interacts with the complex composed, at least, of APC, CTNNB1 and GSK3B; the interaction takes place with the inactive form of GSK3B (phosphorylated at 'Ser-9'). Expressed in testis, skeletal muscle, thymus, prostate, colon, peripheral blood cells, brain and placenta.

Its subcellular location is the nucleus. It localises to the cytoplasm. Functionally, modulates negatively AKT-mediated GSK3B signaling. Induces CTNNB1 'Ser-33' phosphorylation and degradation through the suppression of the inhibitory 'Ser-9' phosphorylation of GSK3B, which represses the function of the APC:CTNNB1:GSK3B complex and the interaction with CDH1/E-cadherin in adherent junctions. Plays a role in the regulation of cell cycle and cell adhesion. Has an inhibitory role on AR-signaling pathway through the induction of receptor proteasomal degradation. The polypeptide is Jupiter microtubule associated homolog 1 (Homo sapiens (Human)).